A 683-amino-acid polypeptide reads, in one-letter code: PTS system mannose-specific EIIBCA component (683 aa).

The PTS EIIB type-1 domain occupies 1 to 89 (MASKLTTTSQ…LKLDGMKHFA (89 aa)). The Phosphocysteine intermediate; for EIIB activity role is filled by Cys-28. Residues 117–476 (EFLSDTFRPI…NEERDEARAK (360 aa)) enclose the PTS EIIC type-1 domain. Transmembrane regions (helical) follow at residues 126-146 (ILWA…ADTF), 162-182 (YVFL…MVGA), 193-213 (WIGA…LGSA), 225-245 (VLND…GLYW), 260-280 (MVFV…FLLG), 303-323 (FILS…GLHW), 344-364 (PMGA…LLSI), 376-396 (LGGM…YGVL), 409-429 (GCLA…AFVF), and 442-462 (LGYT…VLAL). Residues 550–654 (DPIFAAGKLG…PLITPVVVSN (105 aa)) form the PTS EIIA type-1 domain. Catalysis depends on His-602, which acts as the Tele-phosphohistidine intermediate; for EIIA activity.

Its subcellular location is the cell membrane. The enzyme catalyses D-mannose(out) + N(pros)-phospho-L-histidyl-[protein] = D-mannose 6-phosphate(in) + L-histidyl-[protein]. Functionally, the phosphoenolpyruvate-dependent sugar phosphotransferase system (sugar PTS), a major carbohydrate active -transport system, catalyzes the phosphorylation of incoming sugar substrates concomitantly with their translocation across the cell membrane. This system is involved in mannose transport. This Corynebacterium glutamicum (strain ATCC 13032 / DSM 20300 / JCM 1318 / BCRC 11384 / CCUG 27702 / LMG 3730 / NBRC 12168 / NCIMB 10025 / NRRL B-2784 / 534) protein is PTS system mannose-specific EIIBCA component (ptsM).